Reading from the N-terminus, the 159-residue chain is 2-C-methyl-D-erythritol 2,4-cyclodiphosphate synthase (159 aa).

2 residues coordinate a divalent metal cation: aspartate 8 and histidine 10. 4-CDP-2-C-methyl-D-erythritol 2-phosphate-binding positions include 8–10 (DVH) and 34–35 (HS). An a divalent metal cation-binding site is contributed by histidine 42. Residues 56–58 (DIG), 61–65 (FPDTD), 100–106 (AQAPKML), 132–135 (TTTE), phenylalanine 139, and arginine 142 contribute to the 4-CDP-2-C-methyl-D-erythritol 2-phosphate site.

Belongs to the IspF family. In terms of assembly, homotrimer. Requires a divalent metal cation as cofactor.

It catalyses the reaction 4-CDP-2-C-methyl-D-erythritol 2-phosphate = 2-C-methyl-D-erythritol 2,4-cyclic diphosphate + CMP. It participates in isoprenoid biosynthesis; isopentenyl diphosphate biosynthesis via DXP pathway; isopentenyl diphosphate from 1-deoxy-D-xylulose 5-phosphate: step 4/6. Involved in the biosynthesis of isopentenyl diphosphate (IPP) and dimethylallyl diphosphate (DMAPP), two major building blocks of isoprenoid compounds. Catalyzes the conversion of 4-diphosphocytidyl-2-C-methyl-D-erythritol 2-phosphate (CDP-ME2P) to 2-C-methyl-D-erythritol 2,4-cyclodiphosphate (ME-CPP) with a corresponding release of cytidine 5-monophosphate (CMP). This Klebsiella pneumoniae subsp. pneumoniae (strain ATCC 700721 / MGH 78578) protein is 2-C-methyl-D-erythritol 2,4-cyclodiphosphate synthase.